The primary structure comprises 268 residues: Resolvase (268 aa).

Residues 47 to 250 form the Tyr recombinase domain; it reads ELPKYLLAPE…FALDVAARHR (204 aa). Catalysis depends on residues Arg82, Lys114, His202, Arg205, and His228. Tyr237 serves as the catalytic O-(3'-phospho-DNA)-tyrosine intermediate.

This sequence belongs to the 'phage' integrase family.

Acts as a repressor of transcription and as a site-specific resolvase that cleaves at the RfsF site. In Escherichia coli (strain K12), this protein is Resolvase (resD).